Consider the following 295-residue polypeptide: 33 kDa chaperonin (295 aa).

2 cysteine pairs are disulfide-bonded: Cys-238–Cys-240 and Cys-271–Cys-274.

This sequence belongs to the HSP33 family. Post-translationally, under oxidizing conditions two disulfide bonds are formed involving the reactive cysteines. Under reducing conditions zinc is bound to the reactive cysteines and the protein is inactive.

The protein resides in the cytoplasm. In terms of biological role, redox regulated molecular chaperone. Protects both thermally unfolding and oxidatively damaged proteins from irreversible aggregation. Plays an important role in the bacterial defense system toward oxidative stress. This is 33 kDa chaperonin from Clostridium botulinum (strain Alaska E43 / Type E3).